A 209-amino-acid chain; its full sequence is Thymidylate kinase (209 aa).

Position 10-17 (10-17) interacts with ATP; sequence GIDGCGKS.

The protein belongs to the thymidylate kinase family.

The enzyme catalyses dTMP + ATP = dTDP + ADP. Its function is as follows. Phosphorylation of dTMP to form dTDP in both de novo and salvage pathways of dTTP synthesis. In Synechococcus sp. (strain CC9902), this protein is Thymidylate kinase.